We begin with the raw amino-acid sequence, 409 residues long: uncharacterized protein (409 aa).

Positions 5–274 (ILIGFVGKPS…LAKQGFVKYE (270 aa)) constitute an OBG-type G domain. GTP contacts are provided by residues 11 to 18 (GKPSSGKS) and 83 to 87 (DVAGL).

It belongs to the TRAFAC class OBG-HflX-like GTPase superfamily. OBG GTPase family.

The protein resides in the cytoplasm. It localises to the nucleus. This is an uncharacterized protein from Schizosaccharomyces pombe (strain 972 / ATCC 24843) (Fission yeast).